The chain runs to 809 residues: Probable disease resistance protein At5g66900 (809 aa).

The 150-residue stretch at Met-1–Val-150 folds into the RPW8 domain. The stretch at Pro-50 to Phe-86 forms a coiled coil. NB-ARC domains follow at residues Pro-153–Trp-280 and Ser-339–Val-438. Ala-194–Thr-201 provides a ligand contact to ATP. The stretch at Gln-494–Phe-515 forms a coiled coil. LRR repeat units lie at residues Lys-650–Ile-672, Ser-674–Leu-696, Arg-698–Leu-720, and Asn-722–Leu-744.

It belongs to the disease resistance NB-LRR family.

Probable disease resistance protein. This is Probable disease resistance protein At5g66900 from Arabidopsis thaliana (Mouse-ear cress).